The chain runs to 470 residues: Solvent efflux pump outer membrane protein SrpC (470 aa).

The signal sequence occupies residues 1–16; that stretch reads MKFKSLPMFALLMLGG. Cysteine 17 is lipidated: N-palmitoyl cysteine. A lipid anchor (S-diacylglycerol cysteine) is attached at cysteine 17. A disordered region spans residues 104–123; the sequence is LDGQASGNRTRLPDDLSPTG.

The protein belongs to the outer membrane factor (OMF) (TC 1.B.17) family.

It is found in the cell outer membrane. In terms of biological role, the outer membrane component of an organic solvent efflux pump. Involved in export of a number of low log POW compounds including hexane (log POW 3.5), toluene (log POW 2.5) and dimethylphthalate (log POW 2.3). The solvent resistance phenotype has been postulated to depend on the operon expression level. This is Solvent efflux pump outer membrane protein SrpC (srpC) from Pseudomonas putida (Arthrobacter siderocapsulatus).